Consider the following 405-residue polypeptide: Glutamate-pyruvate aminotransferase AlaA (405 aa).

L-alanine contacts are provided by glycine 41 and asparagine 179. At lysine 240 the chain carries N6-(pyridoxal phosphate)lysine. Arginine 378 provides a ligand contact to L-alanine.

Belongs to the class-I pyridoxal-phosphate-dependent aminotransferase family. As to quaternary structure, homodimer. Pyridoxal 5'-phosphate serves as cofactor.

It localises to the cytoplasm. The catalysed reaction is L-alanine + 2-oxoglutarate = pyruvate + L-glutamate. It functions in the pathway amino-acid biosynthesis; L-alanine biosynthesis. Involved in the biosynthesis of alanine. Catalyzes the transamination of pyruvate by glutamate, leading to the formation of L-alanine and 2-oxoglutarate. Is also able to catalyze the reverse reaction. In Escherichia coli (strain K12), this protein is Glutamate-pyruvate aminotransferase AlaA.